The chain runs to 50 residues: ATP synthase protein 8 (50 aa).

The chain crosses the membrane as a helical span at residues 13-32 (ITFTFIILAITVYILSKYIL).

It belongs to the ATPase protein 8 family. In terms of assembly, F-type ATPases have 2 components, CF(1) - the catalytic core - and CF(0) - the membrane proton channel.

The protein localises to the mitochondrion membrane. Its function is as follows. Mitochondrial membrane ATP synthase (F(1)F(0) ATP synthase or Complex V) produces ATP from ADP in the presence of a proton gradient across the membrane which is generated by electron transport complexes of the respiratory chain. F-type ATPases consist of two structural domains, F(1) - containing the extramembraneous catalytic core and F(0) - containing the membrane proton channel, linked together by a central stalk and a peripheral stalk. During catalysis, ATP synthesis in the catalytic domain of F(1) is coupled via a rotary mechanism of the central stalk subunits to proton translocation. Part of the complex F(0) domain. Minor subunit located with subunit a in the membrane. The chain is ATP synthase protein 8 (ATP8) from Podospora anserina (strain S / ATCC MYA-4624 / DSM 980 / FGSC 10383) (Pleurage anserina).